Reading from the N-terminus, the 822-residue chain is Molybdenum cofactor sulfurase (822 aa).

Position 239 is an N6-(pyridoxal phosphate)lysine (K239). C401 is an active-site residue. The tract at residues 633–666 is disordered; the sequence is TRISNPTRSSRRSQRALMPGSFPEDPSPTSEQPP. The MOSC domain occupies 643–820; it reads RRSQRALMPG…VMVGDVVTPQ (178 aa).

It belongs to the class-V pyridoxal-phosphate-dependent aminotransferase family. MOCOS subfamily. Pyridoxal 5'-phosphate is required as a cofactor.

The catalysed reaction is Mo-molybdopterin + L-cysteine + AH2 = thio-Mo-molybdopterin + L-alanine + A + H2O. It participates in cofactor biosynthesis; molybdopterin biosynthesis. Sulfurates the molybdenum cofactor. Sulfation of molybdenum is essential for xanthine dehydrogenase (XDH) and aldehyde oxidase (ADO) enzymes in which molybdenum cofactor is liganded by 1 oxygen and 1 sulfur atom in active form. The sequence is that of Molybdenum cofactor sulfurase from Aspergillus oryzae (strain ATCC 42149 / RIB 40) (Yellow koji mold).